The primary structure comprises 373 residues: Histidinol-phosphate aminotransferase 2 (373 aa).

Lys-229 bears the N6-(pyridoxal phosphate)lysine mark.

Belongs to the class-II pyridoxal-phosphate-dependent aminotransferase family. Histidinol-phosphate aminotransferase subfamily. Homodimer. The cofactor is pyridoxal 5'-phosphate.

The enzyme catalyses L-histidinol phosphate + 2-oxoglutarate = 3-(imidazol-4-yl)-2-oxopropyl phosphate + L-glutamate. It functions in the pathway amino-acid biosynthesis; L-histidine biosynthesis; L-histidine from 5-phospho-alpha-D-ribose 1-diphosphate: step 7/9. The protein is Histidinol-phosphate aminotransferase 2 of Hydrogenovibrio crunogenus (strain DSM 25203 / XCL-2) (Thiomicrospira crunogena).